Here is a 787-residue protein sequence, read N- to C-terminus: Integrin beta-3 (787 aa).

A signal peptide spans 1–25; it reads MRTRRPGQLWATLLALGALAGVVVG. The Extracellular segment spans residues 27-717; the sequence is SNICTTRGVN…EEPECPKGPD (691 aa). The PSI domain occupies 29–75; it reads ICTTRGVNSCQQCLAVSPVCAWCSDESLPQNSPRCNLKKNLLKDKCS. 19 disulfide bridges follow: Cys30/Cys48, Cys38/Cys460, Cys41/Cys63, Cys51/Cys74, Cys202/Cys209, Cys257/Cys298, Cys399/Cys411, Cys431/Cys458, Cys462/Cys482, Cys473/Cys485, Cys487/Cys496, Cys498/Cys528, Cys511/Cys526, Cys520/Cys531, Cys533/Cys546, Cys548/Cys569, Cys553/Cys567, Cys561/Cys572, and Cys574/Cys583. The VWFA domain occupies 134 to 376; the sequence is DYPVDIYYLM…QLIVDAYGKI (243 aa). The Mg(2+) site is built by Ser146 and Ser148. Ser148, Asp151, Asp152, and Asp183 together coordinate Ca(2+). Residues 202–209 form a CX3CL1-binding region; the sequence is CYTMKSTC. The involved in CX3CL1-, NRG1-, FGF1- and IGF1-binding stretch occupies residues 202–209; the sequence is CYTMKSTC. Asn240, Asp242, Pro244, Glu245, and Asp276 together coordinate Ca(2+). Glu245 contributes to the Mg(2+) binding site. The segment at 292–312 is CX3CL1-binding; that stretch reads LPNDGRCHIGPDNHYSASTTM. Asn345 and Asn396 each carry an N-linked (GlcNAc...) asparagine glycan. 4 consecutive I-EGF domains span residues 462 to 497, 498 to 547, 548 to 584, and 585 to 624; these read CQAF…SMCE, CSEE…KYCE, CDDF…YYCN, and CTTR…DTCE. An N-linked (GlcNAc...) asparagine glycan is attached at Asn477. An N-linked (GlcNAc...) asparagine glycan is attached at Asn584. Intrachain disulfides connect Cys585/Cys608, Cys592/Cys606, Cys600/Cys611, Cys613/Cys623, Cys626/Cys629, Cys633/Cys680, Cys639/Cys660, Cys642/Cys656, and Cys688/Cys712. N-linked (GlcNAc...) asparagine glycosylation occurs at Asn679. The chain crosses the membrane as a helical span at residues 718–738; the sequence is ILVVLLSVMGAILLIGLATLL. Over 739-787 the chain is Cytoplasmic; it reads IWKLLITIHDRKEFAKFEEERARAKWDTANNPLYKEATSTFTNITYRGT. Thr766 is modified (phosphothreonine). Residue Tyr772 is modified to Phosphotyrosine. An LIR motif is present at residues 776–782; the sequence is TSTFTNI. Position 778 is a phosphothreonine (Thr778). Tyr784 bears the Phosphotyrosine mark.

This sequence belongs to the integrin beta chain family. Heterodimer of an alpha and a beta subunit. Beta-3 (ITGB3) associates with either alpha-IIB (ITGA2B) or alpha-V (ITGAV). Interacts with FLNB and COMP. Interacts with PDIA6 following platelet stimulation. Interacts with SYK; upon activation by ITGB3 promotes platelet adhesion. Interacts with MYO10. Interacts with DAB2. Interacts with FERMT2. Integrin ITGAV:ITGB3 interacts with FBLN5 (via N-terminus). Interacts with EMP2; regulates the levels of the heterodimer ITGA5:ITGB3 integrin expression on the plasma membrane. ITGAV:ITGB3 interacts with CCN3. ITGAV:ITGB3 and ITGA2B:ITGB3 interact with SELP (via C-type lectin domain); the interaction mediates cell-cell interaction and adhesion. ITGAV:ITGB3 interacts with AGRA2. ITGAV:ITGB3 is found in a ternary complex with CX3CR1 and CX3CL1. ITGAV:ITGB3 is found in a ternary complex with NRG1 and ERBB3. ITGAV:ITGB3 is found in a ternary complex with FGF1 and FGFR1. ITGAV:ITGB3 interacts with FGF2; it is likely that FGF2 can simultaneously bind ITGAV:ITGB3 and FGF receptors. ITGAV:ITGB3 binds to IL1B. ITGAV:ITGB3 is found in a ternary complex with IGF1 and IGF1R. ITGAV:ITGB3 interacts with IGF2. ITGAV:ITGB3 interacts with FBN1. ITGAV:ITGB3 interacts with CD9, CD81 and CD151 (via second extracellular domain). Interacts (via the allosteric site (site 2)) with CXCL12 in a CXCR4-independent manner. Interacts with MXRA8/DICAM; the interaction inhibits ITGAV:ITGB3 heterodimer formation. ITGAV:ITGB3 interacts with PTN. Forms a complex with PTPRZ1 and PTN that stimulates endothelial cell migration through ITGB3 Tyr-772 phosphorylation. ITGAV:ITGB3 interacts with SLC6A4. Interacts with SLC6A4 (via C-terminus); this interaction regulates SLC6A4 trafficking. ITGA2B:ITGB3 interacts with PPIA/CYPA; the interaction is ROS and PPIase activity-dependent and is increased in the presence of thrombin. Interacts with tensin TNS3; TNS3 also interacts with PEAK1, thus acting as an adapter molecule to bridge the association of PEAK1 with ITGB3. Interacts with TM4SF19. Post-translationally, phosphorylated on tyrosine residues in response to thrombin-induced platelet aggregation. Probably involved in outside-in signaling.

The protein resides in the cell membrane. The protein localises to the cell projection. It is found in the lamellipodium membrane. It localises to the cell junction. Its subcellular location is the focal adhesion. The protein resides in the postsynaptic cell membrane. The protein localises to the synapse. Integrin alpha-V/beta-3 (ITGAV:ITGB3) is a receptor for cytotactin, fibronectin, laminin, matrix metalloproteinase-2, osteopontin, osteomodulin, prothrombin, thrombospondin, vitronectin and von Willebrand factor. Integrin alpha-IIB/beta-3 (ITGA2B:ITGB3) is a receptor for fibronectin, fibrinogen, plasminogen, prothrombin, thrombospondin and vitronectin. Integrins alpha-IIB/beta-3 and alpha-V/beta-3 recognize the sequence R-G-D in a wide array of ligands. Integrin alpha-IIB/beta-3 recognizes the sequence H-H-L-G-G-G-A-K-Q-A-G-D-V in fibrinogen gamma chain. Following activation integrin alpha-IIB/beta-3 brings about platelet/platelet interaction through binding of soluble fibrinogen. This step leads to rapid platelet aggregation which physically plugs ruptured endothelial surfaces. Fibrinogen binding enhances SELP expression in activated platelets. ITGAV:ITGB3 binds to fractalkine (CX3CL1) and acts as its coreceptor in CX3CR1-dependent fractalkine signaling. ITGAV:ITGB3 binds to NRG1 (via EGF domain) and this binding is essential for NRG1-ERBB signaling. ITGAV:ITGB3 binds to FGF1 and this binding is essential for FGF1 signaling. ITGAV:ITGB3 binds to FGF2 and this binding is essential for FGF2 signaling. ITGAV:ITGB3 binds to IGF1 and this binding is essential for IGF1 signaling. ITGAV:ITGB3 binds to IGF2 and this binding is essential for IGF2 signaling. ITGAV:ITGB3 binds to IL1B and this binding is essential for IL1B signaling. ITGAV:ITGB3 binds to PLA2G2A via a site (site 2) which is distinct from the classical ligand-binding site (site 1) and this induces integrin conformational changes and enhanced ligand binding to site 1. ITGAV:ITGB3 acts as a receptor for fibrillin-1 (FBN1) and mediates R-G-D-dependent cell adhesion to FBN1. In brain, plays a role in synaptic transmission and plasticity. Involved in the regulation of the serotonin neurotransmission, is required to localize to specific compartments within the synapse the serotonin receptor SLC6A4 and for an appropriate reuptake of serotonin. Controls excitatory synaptic strength by regulating GRIA2-containing AMPAR endocytosis, which affects AMPAR abundance and composition. ITGAV:ITGB3 acts as a receptor for CD40LG. ITGAV:ITGB3 acts as a receptor for IBSP and promotes cell adhesion and migration to IBSP. The protein is Integrin beta-3 of Rattus norvegicus (Rat).